The primary structure comprises 400 residues: Endoglucanase 5A (400 aa).

A signal peptide spans 1 to 26 (MKKITTIFVVLLMTVALFSIGNTTAA). Residues His61, 65 to 66 (WY), Tyr92, and His127 each bind substrate. Glu165 serves as the catalytic Proton donor. Tyr228 contacts substrate. Glu254 (nucleophile) is an active-site residue. Residues 260-261 (AT), Trp288, and 293-295 (KDE) contribute to the substrate site. The disordered stretch occupies residues 328 to 363 (ESASIPPSDPTPPSDPGEPDPTPPSDPGEYPAWDPN). Over residues 334–353 (PSDPTPPSDPGEPDPTPPSD) the composition is skewed to pro residues. One can recognise a Chitin-binding type-3 domain in the interval 357 to 396 (YPAWDPNQIYTNEIVYHNGQLWQAKWWTQNQEPGDPYGPW).

It belongs to the glycosyl hydrolase 5 (cellulase A) family. Monomer.

The protein localises to the secreted. It catalyses the reaction Endohydrolysis of (1-&gt;4)-beta-D-glucosidic linkages in cellulose, lichenin and cereal beta-D-glucans.. This chain is Endoglucanase 5A (cel5A), found in Salipaludibacillus agaradhaerens (Bacillus agaradhaerens).